The following is a 372-amino-acid chain: Putative aminopeptidase SgcX (372 aa).

2 residues coordinate a divalent metal cation: H67 and D180. The Proton acceptor role is filled by E212. Positions 213, 235, and 329 each coordinate a divalent metal cation.

This sequence belongs to the peptidase M42 family. Requires a divalent metal cation as cofactor.

This chain is Putative aminopeptidase SgcX (sgcX), found in Salmonella typhi.